The primary structure comprises 556 residues: Membrane protein insertase YidC (556 aa).

The next 5 membrane-spanning stretches (helical) occupy residues 6–26 (IVLY…WQID), 332–352 (LDLT…FSLM), 358–378 (VVGN…LAFY), 428–448 (LGGC…YWVL), and 501–521 (VMMF…SGLV).

Belongs to the OXA1/ALB3/YidC family. Type 1 subfamily. In terms of assembly, interacts with the Sec translocase complex via SecD. Specifically interacts with transmembrane segments of nascent integral membrane proteins during membrane integration.

The protein localises to the cell inner membrane. Its function is as follows. Required for the insertion and/or proper folding and/or complex formation of integral membrane proteins into the membrane. Involved in integration of membrane proteins that insert both dependently and independently of the Sec translocase complex, as well as at least some lipoproteins. Aids folding of multispanning membrane proteins. The sequence is that of Membrane protein insertase YidC from Legionella pneumophila (strain Corby).